The chain runs to 417 residues: Gamma-glutamyl phosphate reductase (417 aa).

The protein belongs to the gamma-glutamyl phosphate reductase family.

The protein localises to the cytoplasm. It carries out the reaction L-glutamate 5-semialdehyde + phosphate + NADP(+) = L-glutamyl 5-phosphate + NADPH + H(+). It functions in the pathway amino-acid biosynthesis; L-proline biosynthesis; L-glutamate 5-semialdehyde from L-glutamate: step 2/2. In terms of biological role, catalyzes the NADPH-dependent reduction of L-glutamate 5-phosphate into L-glutamate 5-semialdehyde and phosphate. The product spontaneously undergoes cyclization to form 1-pyrroline-5-carboxylate. This chain is Gamma-glutamyl phosphate reductase, found in Escherichia coli O45:K1 (strain S88 / ExPEC).